A 132-amino-acid chain; its full sequence is Small ribosomal subunit protein uS11 (132 aa).

The tract at residues 113 to 132 (VTPIPHDGTRAPGGKRGRRV) is disordered.

It belongs to the universal ribosomal protein uS11 family. Part of the 30S ribosomal subunit.

Functionally, located on the platform of the 30S subunit. This Methanocella arvoryzae (strain DSM 22066 / NBRC 105507 / MRE50) protein is Small ribosomal subunit protein uS11.